The following is a 132-amino-acid chain: Small ribosomal subunit protein uS8 (132 aa).

Belongs to the universal ribosomal protein uS8 family. Part of the 30S ribosomal subunit. Contacts proteins S5 and S12.

Its function is as follows. One of the primary rRNA binding proteins, it binds directly to 16S rRNA central domain where it helps coordinate assembly of the platform of the 30S subunit. The protein is Small ribosomal subunit protein uS8 of Bartonella quintana (strain Toulouse) (Rochalimaea quintana).